The primary structure comprises 540 residues: SNW/SKI-interacting protein B (540 aa).

Disordered stretches follow at residues Met1–Val106, Gly215–Gly273, Gly351–Asp402, and Ala502–His526. Composition is skewed to basic and acidic residues over residues Pro16–Tyr29 and Met83–Gln94. Residues Pro189 to Ala353 are SNW. Positions Ala236–Pro251 are enriched in pro residues. Residues Glu359–Ala382 are compositionally biased toward basic and acidic residues. Residues Arg383 to Ser393 show a composition bias toward low complexity.

It belongs to the SNW family.

Its subcellular location is the nucleus. The polypeptide is SNW/SKI-interacting protein B (Oryza sativa subsp. japonica (Rice)).